A 1024-amino-acid chain; its full sequence is Seizure 6-like protein (1024 aa).

Positions 1–28 are cleaved as a signal peptide; the sequence is MPAARPPAAGLRGISLFLALLLGSPAAA. Topologically, residues 29-958 are extracellular; the sequence is LERDALPEGD…ETSLEGGNMA (930 aa). Disordered stretches follow at residues 33-77, 108-184, and 212-234; these read ALPE…SQSA, RPKH…EVPL, and AHTL…EAPQ. Residue Ser49 is glycosylated (O-linked (GalNAc...) serine). Positions 56-66 are enriched in basic and acidic residues; it reads SPGKEHPEERV. The segment covering 110 to 120 has biased composition (basic residues); the sequence is KHALPPKKKLP. Over residues 138-162 the composition is skewed to polar residues; it reads SAATVQRAGSQPASQGLDLLSSSTE. O-glycosylated at one site stretches follow at residues 147 to 161 and 176 to 180; these read SQPA…SSST and SEEAS. Residues Cys281 and Cys308 are joined by a disulfide bond. In terms of domain architecture, CUB 1 spans 281 to 389; the sequence is CSVSFSNPEG…GTFQLHYQAF (109 aa). N-linked (GlcNAc...) asparagine glycosylation is found at Asn311, Asn328, and Asn350. The 60-residue stretch at 391–450 folds into the Sushi 1 domain; that stretch reads LSCNFPRRPDSGDVTVMDLHSGGVAHFHCHLGYELQGAKMLTCINASKPHWSSQEPICSA. Intrachain disulfides connect Cys393–Cys433 and Cys419–Cys448. Asn435, Asn458, Asn474, Asn514, Asn576, Asn618, Asn674, and Asn742 each carry an N-linked (GlcNAc...) asparagine glycan. In terms of domain architecture, CUB 2 spans 452-562; that stretch reads CGGAVHNATI…STFNIRFEAF (111 aa). Positions 565–626 constitute a Sushi 2 domain; sequence GHCYEPYIQN…WNDTEPLCRA (62 aa). Intrachain disulfides connect Cys567–Cys609 and Cys594–Cys624. Residues 628–739 enclose the CUB 3 domain; it reads CGGELSAVAG…QGFIMNYIEV (112 aa). 3 Sushi domains span residues 743–802, 804–867, and 871–932; these read DSCS…FCEK, MYCT…HCVS, and LACD…VCKV. Disulfide bonds link Cys745–Cys787, Cys773–Cys800, Cys806–Cys848, Cys834–Cys865, Cys873–Cys915, and Cys901–Cys930. The helical transmembrane segment at 959-979 threads the bilayer; that stretch reads LAIFIPVLIISLLLGGAYIYI. Residues 980 to 1024 are Cytoplasmic-facing; sequence TRCRYYSNLRLPLMYSHPYSQITVETEFDNPIYETGETREYEVSI.

It belongs to the SEZ6 family. Post-translationally, O-glycosylated. Widely expressed, including adult and fetal brains and lungs. Not expressed in all lung cancer cell lines.

Its subcellular location is the endoplasmic reticulum membrane. Functionally, may contribute to specialized endoplasmic reticulum functions in neurons. The protein is Seizure 6-like protein (SEZ6L) of Homo sapiens (Human).